Reading from the N-terminus, the 172-residue chain is Disulfide bond formation protein B (172 aa).

Topologically, residues 1–11 (MNPFRWSFRAQ) are cytoplasmic. Residues 12 to 28 (FLLGFLACAGLLAYAIY) form a helical membrane-spanning segment. Residues 29-46 (VQLHLGLEPCPLCIFQRI) are Periplasmic-facing. The cysteines at positions 38 and 41 are disulfide-linked. A helical membrane pass occupies residues 47 to 63 (AFAALAMFFLLGALHGP). Residues 64-70 (RAAAGRK) lie on the Cytoplasmic side of the membrane. A helical membrane pass occupies residues 71–88 (VYGVLSFIAAGVGMGIAA). Over 89–145 (RHVWVQIRPKDMMSSCGPPLSFLSETMGPFEVFRTVLTGTGDCGNIDWRFLGLSMPM) the chain is Periplasmic. Cysteine 104 and cysteine 131 form a disulfide bridge. A helical membrane pass occupies residues 146–164 (WSMVWFVGLALWALYAGFK). Over 165–172 (ARRSSVHH) the chain is Cytoplasmic.

The protein belongs to the DsbB family.

It is found in the cell inner membrane. In terms of biological role, required for disulfide bond formation in some periplasmic proteins. Acts by oxidizing the DsbA protein. The protein is Disulfide bond formation protein B of Xanthomonas euvesicatoria pv. vesicatoria (strain 85-10) (Xanthomonas campestris pv. vesicatoria).